A 199-amino-acid chain; its full sequence is 3-isopropylmalate dehydratase small subunit (199 aa).

It belongs to the LeuD family. LeuD type 1 subfamily. As to quaternary structure, heterodimer of LeuC and LeuD.

The catalysed reaction is (2R,3S)-3-isopropylmalate = (2S)-2-isopropylmalate. Its pathway is amino-acid biosynthesis; L-leucine biosynthesis; L-leucine from 3-methyl-2-oxobutanoate: step 2/4. Functionally, catalyzes the isomerization between 2-isopropylmalate and 3-isopropylmalate, via the formation of 2-isopropylmaleate. The polypeptide is 3-isopropylmalate dehydratase small subunit (Pseudoalteromonas translucida (strain TAC 125)).